The chain runs to 147 residues: Prefoldin subunit alpha (147 aa).

It belongs to the prefoldin alpha subunit family. Heterohexamer of two alpha and four beta subunits.

The protein localises to the cytoplasm. Its function is as follows. Molecular chaperone capable of stabilizing a range of proteins. Seems to fulfill an ATP-independent, HSP70-like function in archaeal de novo protein folding. This Methanocorpusculum labreanum (strain ATCC 43576 / DSM 4855 / Z) protein is Prefoldin subunit alpha.